Consider the following 151-residue polypeptide: Large ribosomal subunit protein bL9 (151 aa).

The protein belongs to the bacterial ribosomal protein bL9 family.

Its function is as follows. Binds to the 23S rRNA. In Bordetella pertussis (strain Tohama I / ATCC BAA-589 / NCTC 13251), this protein is Large ribosomal subunit protein bL9.